The chain runs to 212 residues: Cytochrome c biogenesis ATP-binding export protein CcmA (212 aa).

The ABC transporter domain maps to 7–209 (LSLQNLSCQR…HLQKLNLAAY (203 aa)). 39–46 (GHNGIGKT) contacts ATP.

The protein belongs to the ABC transporter superfamily. CcmA exporter (TC 3.A.1.107) family. In terms of assembly, the complex is composed of two ATP-binding proteins (CcmA) and two transmembrane proteins (CcmB).

Its subcellular location is the cell inner membrane. The enzyme catalyses heme b(in) + ATP + H2O = heme b(out) + ADP + phosphate + H(+). Part of the ABC transporter complex CcmAB involved in the biogenesis of c-type cytochromes; once thought to export heme, this seems not to be the case, but its exact role is uncertain. Responsible for energy coupling to the transport system. The chain is Cytochrome c biogenesis ATP-binding export protein CcmA from Haemophilus influenzae (strain ATCC 51907 / DSM 11121 / KW20 / Rd).